The following is a 246-amino-acid chain: 1-(5-phosphoribosyl)-5-[(5-phosphoribosylamino)methylideneamino] imidazole-4-carboxamide isomerase (246 aa).

Aspartate 8 functions as the Proton acceptor in the catalytic mechanism. Residue aspartate 131 is the Proton donor of the active site.

Belongs to the HisA/HisF family.

Its subcellular location is the cytoplasm. It carries out the reaction 1-(5-phospho-beta-D-ribosyl)-5-[(5-phospho-beta-D-ribosylamino)methylideneamino]imidazole-4-carboxamide = 5-[(5-phospho-1-deoxy-D-ribulos-1-ylimino)methylamino]-1-(5-phospho-beta-D-ribosyl)imidazole-4-carboxamide. It functions in the pathway amino-acid biosynthesis; L-histidine biosynthesis; L-histidine from 5-phospho-alpha-D-ribose 1-diphosphate: step 4/9. The chain is 1-(5-phosphoribosyl)-5-[(5-phosphoribosylamino)methylideneamino] imidazole-4-carboxamide isomerase from Polaromonas naphthalenivorans (strain CJ2).